The chain runs to 204 residues: Tumor necrosis factor alpha-induced protein 8-like protein 3 (204 aa).

Over residues 1-10 the composition is skewed to acidic residues; it reads MDSDSGEQSE. The interval 1–20 is disordered; the sequence is MDSDSGEQSEGEPGTAAGPH. The interval 21-204 is binding to phosphoinositides; the sequence is VFSSKNLALQ…INKLLDDKIL (184 aa).

This sequence belongs to the TNFAIP8 family. In terms of tissue distribution, widely expressed (at protein level).

The protein localises to the cytoplasm. The protein resides in the cell membrane. Its function is as follows. Acts as a lipid transfer protein. Preferentially captures and shuttles two lipid second messengers, i.e., phosphatidylinositol 4,5- bisphosphate and phosphatidylinositol 3,4,5-trisphosphate and increases their levels in the plasma membrane. Additionally, may also function as a lipid-presenting protein to enhance the activity of the PI3K-AKT and MEK-ERK pathways. May act as a regulator of tumorigenesis through its activation of phospholipid signaling. This is Tumor necrosis factor alpha-induced protein 8-like protein 3 (Tnfaip8l3) from Mus musculus (Mouse).